The primary structure comprises 99 residues: EPIDERMAL PATTERNING FACTOR-like protein 8 (99 aa).

The first 35 residues, 1–35 (MDSSRKYKRCGFGAALFVANIFFSLLSLHCISGAH), serve as a signal peptide directing secretion. 3 disulfide bridges follow: C53–C90, C57–C63, and C60–C92.

It belongs to the plant cysteine rich small secretory peptide family. Epidermal patterning factor subfamily.

It is found in the secreted. In terms of biological role, controls stomatal patterning. In Arabidopsis thaliana (Mouse-ear cress), this protein is EPIDERMAL PATTERNING FACTOR-like protein 8.